Reading from the N-terminus, the 470-residue chain is Nuclear receptor ROR-beta (470 aa).

A DNA-binding region (nuclear receptor) is located at residues 18 to 93; that stretch reads VIPCKICGDK…LGMSRDAVKF (76 aa). 2 NR C4-type zinc fingers span residues 21-41 and 57-81; these read CKIC…CEGC and CPRQ…LQKC. A compositionally biased stretch (basic and acidic residues) spans 104-117; that stretch reads LYAEVQKHQQRLQE. The tract at residues 104-127 is disordered; it reads LYAEVQKHQQRLQEQRQQQSGEAE. Residues 222–460 enclose the NR LBD domain; sequence EIDRIAQNII…TLFPPLYKEL (239 aa). Residues 456 to 461 carry the AF-2 motif; that stretch reads LYKELF.

The protein belongs to the nuclear hormone receptor family. NR1 subfamily. Monomer. Interacts with CRX. As to expression, isoform 2 expressed with circadian rhythm in eye and pineal gland. Isoform 1 expressed in retina cortex, thalamus, and hypothalamus.

It localises to the nucleus. It is found in the nucleoplasm. Functionally, nuclear receptor that binds DNA as a monomer to ROR response elements (RORE) containing a single core motif half-site 5'-AGGTCA-3' preceded by a short A-T-rich sequence. Considered to have intrinsic transcriptional activity, have some natural ligands such as all-trans retinoic acid (ATRA) and other retinoids which act as inverse agonists repressing the transcriptional activity. Required for normal postnatal development of rod and cone photoreceptor cells. Modulates rod photoreceptors differentiation at least by inducing the transcription factor NRL-mediated pathway. In cone photoreceptor cells, regulates transcription of OPN1SW. Involved in the regulation of the period length and stability of the circadian rhythm. May control cytoarchitectural patterning of neocortical neurons during development. May act in a dose-dependent manner to regulate barrel formation upon innervation of layer IV neurons by thalamocortical axons. May play a role in the suppression of osteoblastic differentiation through the inhibition of RUNX2 transcriptional activity. In terms of biological role, critical for hindlimb motor control and for the differentiation of amacrine and horizontal cells in the retina. Regulates the expression of PTF1A synergistically with FOXN4. This is Nuclear receptor ROR-beta (Rorb) from Rattus norvegicus (Rat).